A 327-amino-acid polypeptide reads, in one-letter code: MSLNEPIKKVSIVIPVYNEQESLPALIDRTTAACKLLTQAYEIILVDDGSSDNSTELLTAAANDPDSHIIAILLNRNYGQHSAIMAGFNQVSGDLIITLDADLQNPPEETPRLVHVAEEGYDVVGTVRANRQDSLFRKTASRMINMMIQRATGKSMGDYGCMLRAYRRHIVEAMLHCHERSTFIPILANTFARRTTEITVHHAEREFGNSKYSLMRLINLMYDLITCLTTTPLRLLSLVGSAIALLGFTFSVLLVALRLIFGPEWAGGGVFTLFAVLFMFIGAQFVGMGLLGEYIGRIYNDVRARPRYFVQKVVGAEQTENNQDVEK.

The next 2 membrane-spanning stretches (helical) occupy residues 235–255 (LLSL…VLLV) and 270–290 (VFTL…GMGL).

The protein belongs to the glycosyltransferase 2 family.

It is found in the cell inner membrane. The catalysed reaction is UDP-4-deoxy-4-formamido-beta-L-arabinose + di-trans,octa-cis-undecaprenyl phosphate = 4-deoxy-4-formamido-alpha-L-arabinopyranosyl di-trans,octa-cis-undecaprenyl phosphate + UDP. It functions in the pathway glycolipid biosynthesis; 4-amino-4-deoxy-alpha-L-arabinose undecaprenyl phosphate biosynthesis; 4-amino-4-deoxy-alpha-L-arabinose undecaprenyl phosphate from UDP-4-deoxy-4-formamido-beta-L-arabinose and undecaprenyl phosphate: step 1/2. The protein operates within bacterial outer membrane biogenesis; lipopolysaccharide biosynthesis. Its function is as follows. Catalyzes the transfer of 4-deoxy-4-formamido-L-arabinose from UDP to undecaprenyl phosphate. The modified arabinose is attached to lipid A and is required for resistance to polymyxin and cationic antimicrobial peptides. The chain is Undecaprenyl-phosphate 4-deoxy-4-formamido-L-arabinose transferase from Yersinia pestis bv. Antiqua (strain Antiqua).